Consider the following 331-residue polypeptide: DNA-directed RNA polymerase subunit alpha (331 aa).

Residues 1 to 237 form an alpha N-terminal domain (alpha-NTD) region; the sequence is MQSSVTEFLI…NQLESFVYLR (237 aa). The segment at 251-331 is alpha C-terminal domain (alpha-CTD); the sequence is FDPILLRPVD…NWPPDNILDN (81 aa).

The protein belongs to the RNA polymerase alpha chain family. As to quaternary structure, homodimer. The RNAP catalytic core consists of 2 alpha, 1 beta, 1 beta' and 1 omega subunit. When a sigma factor is associated with the core the holoenzyme is formed, which can initiate transcription.

It catalyses the reaction RNA(n) + a ribonucleoside 5'-triphosphate = RNA(n+1) + diphosphate. In terms of biological role, DNA-dependent RNA polymerase catalyzes the transcription of DNA into RNA using the four ribonucleoside triphosphates as substrates. This Buchnera aphidicola subsp. Baizongia pistaciae (strain Bp) protein is DNA-directed RNA polymerase subunit alpha.